The following is a 337-amino-acid chain: Inositol 2-dehydrogenase (337 aa).

It belongs to the Gfo/Idh/MocA family. In terms of assembly, homotetramer.

It catalyses the reaction myo-inositol + NAD(+) = scyllo-inosose + NADH + H(+). Its function is as follows. Involved in the oxidation of myo-inositol (MI) to 2-keto-myo-inositol (2KMI or 2-inosose). This chain is Inositol 2-dehydrogenase, found in Burkholderia lata (strain ATCC 17760 / DSM 23089 / LMG 22485 / NCIMB 9086 / R18194 / 383).